The following is a 487-amino-acid chain: Histamine H1 receptor (487 aa).

Residues 1 to 29 (MSLPNSSCLLEDKMCESNKTTMASPQLMP) lie on the Extracellular side of the membrane. N-linked (GlcNAc...) asparagine glycosylation is found at asparagine 5 and asparagine 18. A helical transmembrane segment spans residues 30 to 50 (LVVVLSTICLVTVGLNLLVLY). Over 51–64 (AVRSERKLHTVGNL) the chain is Cytoplasmic. Residues 65 to 89 (YIVSLSVADLIVGAVVMPMNILYLL) traverse the membrane as a helical segment. Over 90–97 (MSKWSLGR) the chain is Extracellular. The helical transmembrane segment at 98–123 (PLCLFWLSMDYVASTASIFSVFILCI) threads the bilayer. Cysteine 100 and cysteine 180 are oxidised to a cystine. Residues aspartate 107 and threonine 112 each coordinate histamine. An important for agonist binding region spans residues 107-112 (DYVAST). The Cytoplasmic segment spans residues 124-144 (DRYRSVQQPLRYLKYRTKTRA). A phosphothreonine mark is found at threonine 140 and threonine 142. Residues 145–164 (SATILGAWFLSFLWVIPILG) traverse the membrane as a helical segment. Topologically, residues 165 to 188 (WNHFMQQTSVRREDKCETDFYDVT) are extracellular. A helical membrane pass occupies residues 189 to 211 (WFKVMTAIINFYLPTLLMLWFYA). Asparagine 198 contacts histamine. The Cytoplasmic portion of the chain corresponds to 212–416 (KIYKAVRQHC…MNRERKAAKQ (205 aa)). At serine 230 the chain carries Phosphoserine. A compositionally biased stretch (basic and acidic residues) spans 238–261 (KLRPENPKGDAKKPGKESPWEVLK). The tract at residues 238-292 (KLRPENPKGDAKKPGKESPWEVLKRKPKDAGGGSVLKSPSQTPKEMKSPVVFSQE) is disordered. Threonine 279 carries the post-translational modification Phosphothreonine. Residues serine 344 and serine 347 each carry the phosphoserine modification. The interval 345–377 (EISEDQMLGDSQSFSRTDSDTTTETASGKGKLR) is disordered. Over residues 353–370 (GDSQSFSRTDSDTTTETA) the composition is skewed to polar residues. 3 positions are modified to phosphoserine: serine 380, serine 396, and serine 398. Residues 417–440 (LGFIMAAFILCWIPYFIFFMVIAF) traverse the membrane as a helical segment. An important for agonist binding region spans residues 424-428 (FILCW). Residue tyrosine 431 participates in histamine binding. An intrachain disulfide couples cysteine 441 to cysteine 444. Topologically, residues 441-446 (CKNCCN) are extracellular. A helical membrane pass occupies residues 447–469 (EHLHMFTIWLGYINSTLNPLIYP). Residues 470 to 487 (LCNENFKKTFKRILHIRS) lie on the Cytoplasmic side of the membrane.

Belongs to the G-protein coupled receptor 1 family. Phosphorylation at sites in the second and third cytoplasmic loops independently contribute to agonist-induced receptor down-regulation.

It is found in the cell membrane. Functionally, G-protein-coupled receptor for histamine, a biogenic amine that functions as an immune modulator and a neurotransmitter. Through the H1 receptor, histamine mediates the contraction of smooth muscles and increases capillary permeability due to contraction of terminal venules. Also mediates neurotransmission in the central nervous system and thereby regulates circadian rhythms, emotional and locomotor activities as well as cognitive functions. This Gorilla gorilla gorilla (Western lowland gorilla) protein is Histamine H1 receptor.